Here is a 375-residue protein sequence, read N- to C-terminus: 23S rRNA (uracil(747)-C(5))-methyltransferase RlmC (375 aa).

Cys-3, Cys-11, Cys-14, and Cys-87 together coordinate [4Fe-4S] cluster. S-adenosyl-L-methionine-binding residues include Gln-212, Phe-241, Glu-262, and Asn-307. The active-site Nucleophile is the Cys-334.

This sequence belongs to the class I-like SAM-binding methyltransferase superfamily. RNA M5U methyltransferase family. RlmC subfamily.

It carries out the reaction uridine(747) in 23S rRNA + S-adenosyl-L-methionine = 5-methyluridine(747) in 23S rRNA + S-adenosyl-L-homocysteine + H(+). In terms of biological role, catalyzes the formation of 5-methyl-uridine at position 747 (m5U747) in 23S rRNA. The chain is 23S rRNA (uracil(747)-C(5))-methyltransferase RlmC from Escherichia fergusonii (strain ATCC 35469 / DSM 13698 / CCUG 18766 / IAM 14443 / JCM 21226 / LMG 7866 / NBRC 102419 / NCTC 12128 / CDC 0568-73).